The sequence spans 142 residues: Hemoglobin subunit alpha (142 aa).

The region spanning 2-142 is the Globin domain; sequence VLSPADKSNV…VSTVLTSKYR (141 aa). The residue at position 4 (S4) is a Phosphoserine. N6-succinyllysine occurs at positions 8 and 12. K17 bears the N6-acetyllysine; alternate mark. K17 carries the post-translational modification N6-succinyllysine; alternate. Residue Y25 is modified to Phosphotyrosine. The residue at position 36 (S36) is a Phosphoserine. N6-succinyllysine is present on K41. Position 50 is a phosphoserine (S50). H59 serves as a coordination point for O2. Position 88 (H88) interacts with heme b. S103 is modified (phosphoserine). At T109 the chain carries Phosphothreonine. S125 bears the Phosphoserine mark. T135 and T138 each carry phosphothreonine. S139 bears the Phosphoserine mark.

Belongs to the globin family. As to quaternary structure, heterotetramer of two alpha chains and two beta chains. In terms of tissue distribution, red blood cells.

Its function is as follows. Involved in oxygen transport from the lung to the various peripheral tissues. Hemopressin acts as an antagonist peptide of the cannabinoid receptor CNR1. Hemopressin-binding efficiently blocks cannabinoid receptor CNR1 and subsequent signaling. This Ursus maritimus (Polar bear) protein is Hemoglobin subunit alpha (HBA).